A 565-amino-acid chain; its full sequence is Sensor histidine kinase MtrB (565 aa).

A compositionally biased stretch (basic residues) spans 1–13 (MMWGSRRRTRSRW). Positions 1-21 (MMWGSRRRTRSRWGRSGPMTR) are disordered. The next 2 helical transmembrane spans lie at 42–62 (VVAL…FVLT) and 213–233 (GTMI…ALLV). An HAMP domain is found at 235 to 287 (RQVVVPVRSASRIAERFAEGHLSERMPVRGEDDMARLAMSFNDMAESLSRQIT). In terms of domain architecture, Histidine kinase spans 302–519 (DVSHELRTPL…CFRLTLPLVR (218 aa)). H305 is subject to Phosphohistidine; by autocatalysis. Residues 524-565 (TTSPLPMKPIPQPSPSGGQSPSTGPQHAKDRARQREHAERSL) are disordered. Over residues 538-549 (PSGGQSPSTGPQ) the composition is skewed to low complexity. A compositionally biased stretch (basic and acidic residues) spans 550–565 (HAKDRARQREHAERSL).

The protein localises to the cell membrane. The catalysed reaction is ATP + protein L-histidine = ADP + protein N-phospho-L-histidine.. Functionally, member of the two-component regulatory system MtrA/MtrB. Seems to function as a membrane-associated protein kinase that phosphorylates MtrA in response to environmental signals. This is Sensor histidine kinase MtrB (mtrB) from Mycolicibacterium paratuberculosis (strain ATCC BAA-968 / K-10) (Mycobacterium paratuberculosis).